Here is a 143-residue protein sequence, read N- to C-terminus: Transmembrane protein 80 (143 aa).

The next 4 helical transmembrane spans lie at 22–42 (LLCL…LLLV), 47–67 (VFTY…LMGI), 88–108 (LAAS…FLLW), and 122–142 (PLLA…AAFV).

The protein localises to the membrane. It localises to the cell projection. The protein resides in the cilium. The sequence is that of Transmembrane protein 80 (TMEM80) from Bos taurus (Bovine).